The sequence spans 157 residues: Small ribosomal subunit protein uS7c (157 aa).

This sequence belongs to the universal ribosomal protein uS7 family. Part of the 30S ribosomal subunit.

The protein localises to the plastid. It is found in the organellar chromatophore. In terms of biological role, one of the primary rRNA binding proteins, it binds directly to 16S rRNA where it nucleates assembly of the head domain of the 30S subunit. The chain is Small ribosomal subunit protein uS7c (rps7) from Paulinella chromatophora.